A 1866-amino-acid polypeptide reads, in one-letter code: Protein NLRC5 (1866 aa).

Positions 105–135 are disordered; sequence GAEGKSQPESQLHHGLKRPHQSCGSSPRRKQ. The NACHT domain maps to 222–539; that stretch reads RVTVLLGKAG…PKVNKDTLTQ (318 aa). 228–235 is an ATP binding site; that stretch reads GKAGMGKT. LRR repeat units follow at residues 599 to 622, 713 to 737, 741 to 765, 769 to 792, 869 to 892, 897 to 921, 930 to 953, 976 to 1000, 1004 to 1026, 1031 to 1058, 1138 to 1161, 1162 to 1184, 1242 to 1265, 1272 to 1294, 1462 to 1488, 1493 to 1516, 1521 to 1544, 1554 to 1577, 1578 to 1600, 1605 to 1628, 1633 to 1656, 1661 to 1684, 1687 to 1714, 1715 to 1739, 1741 to 1762, and 1795 to 1818; these read LKKL…VDET, MGRL…LVKA, CPQL…IVEV, LPRL…CLAR, GPHL…LMAE, LHIA…VLRA, ELHI…EQKG, SRRM…ALGG, LGHL…RLAQ, LGAL…CFST, LELQ…CLPQ, LPQL…FLLA, CKDL…CLLE, ISGL…LLET, CARL…LLQS, LSEL…HLAS, CHHL…ALMR, RLDL…LSQM, TCLQ…HLSE, ATSL…HLAT, LPEL…QLAE, CRRL…GLAQ, PQHL…ALDG, SPHL…CMEL, LLRQ…LLTS, and MGRL…LLAE.

The protein belongs to the NLRP family. In terms of assembly, interacts with CHUK and IKBKB; prevents CHUK and IKBKB phosphorylation and inhibits their kinase activity. Interacts with RIGI and IFIH1; blocks the interaction of MAVS to RIGI. As to expression, expressed in spleen, thymus, lung, brain, tonsil, heart and prostate.

The protein localises to the cytoplasm. In terms of biological role, probable regulator of the NF-kappa-B and type I interferon signaling pathways. May also regulate the type II interferon signaling pathway. Plays a role in homeostatic control of innate immunity and in antiviral defense mechanisms. The polypeptide is Protein NLRC5 (NLRC5) (Homo sapiens (Human)).